We begin with the raw amino-acid sequence, 754 residues long: Lysophospholipase 3 (754 aa).

The signal sequence occupies residues 1 to 19; sequence MKVNLKLIIGSILISQAQA. 2 stretches are compositionally biased toward low complexity: residues 25–40 and 50–88; these read SSGS…SETG and LFGS…SSNS. Residues 25 to 88 are disordered; it reads SSGSSSSSDS…DSSLFSSSNS (64 aa). N-linked (GlcNAc...) asparagine glycosylation is found at Asn-112, Asn-156, Asn-174, Asn-317, Asn-325, Asn-354, Asn-391, Asn-423, Asn-470, Asn-510, Asn-515, Asn-560, Asn-577, Asn-597, Asn-625, and Asn-631. The PLA2c domain occupies 114–670; it reads TCPSKKTFIR…QEYCWTGGFK (557 aa). Residues 687–721 are compositionally biased toward low complexity; that stretch reads KTHTSGGTSSTTQQTSTTTGSSANGGSSSTGSSSS. The tract at residues 687-727 is disordered; the sequence is KTHTSGGTSSTTQQTSTTTGSSANGGSSSTGSSSSSKKKNG.

Belongs to the lysophospholipase family.

Its subcellular location is the secreted. It catalyses the reaction a 1-acyl-sn-glycero-3-phosphocholine + H2O = sn-glycerol 3-phosphocholine + a fatty acid + H(+). Catalyzes the release of fatty acids from lysophospholipids. Phospholipase B may well contribute to pathogenicity by abetting the fungus in damaging and traversing host cell membranes, processes which likely increase the rapidity of disseminated infection. The chain is Lysophospholipase 3 (PLB3) from Candida albicans (Yeast).